The sequence spans 404 residues: LL-diaminopimelate aminotransferase (404 aa).

Substrate contacts are provided by Tyr-15 and Gly-42. Pyridoxal 5'-phosphate-binding positions include Tyr-72, 108–109, Tyr-132, Asn-188, Tyr-219, and 247–249; these read AK and SFS. Substrate is bound by residues Lys-109, Tyr-132, and Asn-188. An N6-(pyridoxal phosphate)lysine modification is found at Lys-250. The pyridoxal 5'-phosphate site is built by Arg-258 and Asn-288. 2 residues coordinate substrate: Asn-288 and Arg-384.

The protein belongs to the class-I pyridoxal-phosphate-dependent aminotransferase family. LL-diaminopimelate aminotransferase subfamily. In terms of assembly, homodimer. Pyridoxal 5'-phosphate serves as cofactor.

The enzyme catalyses (2S,6S)-2,6-diaminopimelate + 2-oxoglutarate = (S)-2,3,4,5-tetrahydrodipicolinate + L-glutamate + H2O + H(+). The protein operates within amino-acid biosynthesis; L-lysine biosynthesis via DAP pathway; LL-2,6-diaminopimelate from (S)-tetrahydrodipicolinate (aminotransferase route): step 1/1. Involved in the synthesis of meso-diaminopimelate (m-DAP or DL-DAP), required for both lysine and peptidoglycan biosynthesis. Catalyzes the direct conversion of tetrahydrodipicolinate to LL-diaminopimelate. The protein is LL-diaminopimelate aminotransferase of Lachnoclostridium phytofermentans (strain ATCC 700394 / DSM 18823 / ISDg) (Clostridium phytofermentans).